The chain runs to 175 residues: Inorganic pyrophosphatase (175 aa).

Substrate is bound by residues Lys30, Arg44, and Tyr56. Residues Asp66, Asp71, and Asp103 each coordinate Mg(2+). A substrate-binding site is contributed by Tyr140.

The protein belongs to the PPase family. Homohexamer. Mg(2+) is required as a cofactor.

It localises to the cytoplasm. It carries out the reaction diphosphate + H2O = 2 phosphate + H(+). Functionally, catalyzes the hydrolysis of inorganic pyrophosphate (PPi) forming two phosphate ions. The chain is Inorganic pyrophosphatase from Thermus thermophilus (strain ATCC 27634 / DSM 579 / HB8).